Consider the following 101-residue polypeptide: Urease subunit beta (101 aa).

It belongs to the urease beta subunit family. Heterotrimer of UreA (gamma), UreB (beta) and UreC (alpha) subunits. Three heterotrimers associate to form the active enzyme.

The protein localises to the cytoplasm. It catalyses the reaction urea + 2 H2O + H(+) = hydrogencarbonate + 2 NH4(+). It functions in the pathway nitrogen metabolism; urea degradation; CO(2) and NH(3) from urea (urease route): step 1/1. This Saccharophagus degradans (strain 2-40 / ATCC 43961 / DSM 17024) protein is Urease subunit beta.